Here is a 235-residue protein sequence, read N- to C-terminus: 2-C-methyl-D-erythritol 4-phosphate cytidylyltransferase (235 aa).

Belongs to the IspD/TarI cytidylyltransferase family. IspD subfamily. Homodimer.

It carries out the reaction 2-C-methyl-D-erythritol 4-phosphate + CTP + H(+) = 4-CDP-2-C-methyl-D-erythritol + diphosphate. The protein operates within isoprenoid biosynthesis; isopentenyl diphosphate biosynthesis via DXP pathway; isopentenyl diphosphate from 1-deoxy-D-xylulose 5-phosphate: step 2/6. Its function is as follows. Catalyzes the formation of 4-diphosphocytidyl-2-C-methyl-D-erythritol from CTP and 2-C-methyl-D-erythritol 4-phosphate (MEP). The chain is 2-C-methyl-D-erythritol 4-phosphate cytidylyltransferase from Blochmanniella pennsylvanica (strain BPEN).